The sequence spans 322 residues: DNA repair and recombination protein RadA (322 aa).

An ATP-binding site is contributed by 105–112 (GMYGSGKT).

The protein belongs to the eukaryotic RecA-like protein family.

Functionally, involved in DNA repair and in homologous recombination. Binds and assemble on single-stranded DNA to form a nucleoprotein filament. Hydrolyzes ATP in a ssDNA-dependent manner and promotes DNA strand exchange between homologous DNA molecules. The chain is DNA repair and recombination protein RadA from Methanococcus maripaludis (strain C5 / ATCC BAA-1333).